Here is a 488-residue protein sequence, read N- to C-terminus: Inosine-5'-monophosphate dehydrogenase (488 aa).

CBS domains follow at residues Val95 to Ile153 and Met157 to Glu216. Residues Asp250 and Gly300 to Gly302 each bind NAD(+). 2 residues coordinate K(+): Gly302 and Gly304. Ser305 serves as a coordination point for IMP. A K(+)-binding site is contributed by Cys307. Catalysis depends on Cys307, which acts as the Thioimidate intermediate. IMP contacts are provided by residues Asp340–Gly342, Gly363–Ser364, and Tyr387–Gly391. Arg403 functions as the Proton acceptor in the catalytic mechanism. Glu417 is an IMP binding site. Residues Gly468–Phe488 form a disordered region. Residues Glu471, Ser472, and His473 each coordinate K(+). The span at His475–Phe488 shows a compositional bias: polar residues.

It belongs to the IMPDH/GMPR family. As to quaternary structure, homotetramer. K(+) is required as a cofactor.

It catalyses the reaction IMP + NAD(+) + H2O = XMP + NADH + H(+). Its pathway is purine metabolism; XMP biosynthesis via de novo pathway; XMP from IMP: step 1/1. Mycophenolic acid (MPA) is a non-competitive inhibitor that prevents formation of the closed enzyme conformation by binding to the same site as the amobile flap. In contrast, mizoribine monophosphate (MZP) is a competitive inhibitor that induces the closed conformation. MPA is a potent inhibitor of mammalian IMPDHs but a poor inhibitor of the bacterial enzymes. MZP is a more potent inhibitor of bacterial IMPDH. Its function is as follows. Catalyzes the conversion of inosine 5'-phosphate (IMP) to xanthosine 5'-phosphate (XMP), the first committed and rate-limiting step in the de novo synthesis of guanine nucleotides, and therefore plays an important role in the regulation of cell growth. This chain is Inosine-5'-monophosphate dehydrogenase, found in Staphylococcus aureus (strain MW2).